The sequence spans 525 residues: Ent-kaurene oxidase (525 aa).

The helical transmembrane segment at 31-51 (VHWLIYVAFGAWLCSYVIHVL) threads the bilayer. Cys466 contributes to the heme binding site.

It belongs to the cytochrome P450 family. Heme serves as cofactor.

It localises to the membrane. The enzyme catalyses ent-kaur-16-ene + 3 reduced [NADPH--hemoprotein reductase] + 3 O2 = ent-kaur-16-en-19-oate + 3 oxidized [NADPH--hemoprotein reductase] + 4 H2O + 4 H(+). The protein operates within plant hormone biosynthesis; gibberellin biosynthesis. Its function is as follows. Catalyzes three successive oxidations of the 4-methyl group of ent-kaurene giving kaurenoic acid, a key step in gibberellin (GA) biosynthesis. This Fusarium fujikuroi (Bakanae and foot rot disease fungus) protein is Ent-kaurene oxidase (CYP503A1).